The following is a 175-amino-acid chain: Putative lipoprotein LppN (175 aa).

A signal peptide spans 1 to 20; sequence MRLPGRHVLYALSAVTMLAA. Cys21 is lipidated: N-palmitoyl cysteine. Cys21 is lipidated: S-diacylglycerol cysteine. Positions 31–56 are disordered; sequence ASTNMNPTNPPATAETATVSPTPAPQ. Over residues 33-48 the composition is skewed to low complexity; that stretch reads TNMNPTNPPATAETAT.

It localises to the cell membrane. The polypeptide is Putative lipoprotein LppN (lppN) (Mycobacterium bovis (strain ATCC BAA-935 / AF2122/97)).